A 309-amino-acid chain; its full sequence is Cyclin-dependent kinase B1-1 (309 aa).

The region spanning 4 to 301 is the Protein kinase domain; sequence YEKLEKVGEG…AKTALDHPYF (298 aa). Residues 10–18 and lysine 33 contribute to the ATP site; that span reads VGEGTYGKV. Tyrosine 15 carries the phosphotyrosine modification. Aspartate 142 (proton acceptor) is an active-site residue. Threonine 176 bears the Phosphothreonine; by CAK mark.

It belongs to the protein kinase superfamily. CMGC Ser/Thr protein kinase family. CDC2/CDKX subfamily. Interacts with CKS1. Interacts with CYCU3-1. Interacts with SIM, SMR1 and SMR2. As to expression, highly expressed in guard cells and stomatal precursor cells of cotyledons. Expressed in roots, stems, flowers and siliques.

The protein localises to the nucleus. The catalysed reaction is L-seryl-[protein] + ATP = O-phospho-L-seryl-[protein] + ADP + H(+). It carries out the reaction L-threonyl-[protein] + ATP = O-phospho-L-threonyl-[protein] + ADP + H(+). It catalyses the reaction [DNA-directed RNA polymerase] + ATP = phospho-[DNA-directed RNA polymerase] + ADP + H(+). With respect to regulation, phosphorylation at Thr-14 or Tyr-15 inactivates the enzyme, while phosphorylation at Thr-176 activates it. Functionally, may control G2/M (mitosis) phase progression. Plays a role in regulating seedling growth in darkness via regulation of hypocotyl cell elongation and cotyledon cell development. Plays a role in stomatal development. Required to suppress endoreduplication. Together with CDKB1-2, promotes both the last division in the stomatal cell lineage as well as the number of stomata. In collaboration with MYB124 and MYB88, restrict the G1/S transition and chloroplast and nuclear number during stomatal formation, and normally maintain fate and developmental progression throughout the stomatal cell lineage. In Arabidopsis thaliana (Mouse-ear cress), this protein is Cyclin-dependent kinase B1-1 (CDKB1-1).